A 657-amino-acid chain; its full sequence is MTQLAIGKPAPLGAHYDGQGVNFTLFSVHAERVELCVFDANGQEHRYDLPGHSGDIWHGYLPDARPGLRYGYRVHGPWQPAEGHRFNPAKLLIDPCARQIDGEFKDNPLLHAGHNEPDYRDNAAIAPKCVVVVDHYDWEDDAPPRTPWGSTIIYEAHVKGLTYLHPEIPVEIRGTYKALGHPVMINYLKQLGITALELLPVAQFASEPRLQRMGLSNYWGYNPVAMFALHPAYACSPETALDEFRDAIKALHKAGIEVILDIVLNHSAELDLDGPLFSLRGIDNRSYYWIREDGDYHNWTGCGNTLNLSHPAVVDYASACLRYWVETCHVDGFRFDLAAVMGRTPEFRQDAPLFTAIQNCPVLSQVKLIAEPWDIAPGGYQVGNFPPLFAEWNDHFRDAARRFWLHYDLPLGAFAGRFAASSDVFKRNGRLPSAAINLVTAHDGFTLRDCVCFNHKHNEANGEENRDGTNNNYSNNHGKEGLGGTLDLVERRRDSIHALLTTLLLSQGTPMLLAGDEHGHSQHGNNNAYCQDNQLTWLDWSQASSGLTAFTAALIHLRKRIPALVENRWWEEGDGNVRWLNRYAQPLSTDEWQNGPKQLQILLSDRFLIAINATLEVTEIVLPAGEWHAIPPFAGEDNPVITAVWQGPAHGLCVFQR.

Residue D336 is the Nucleophile of the active site. E371 functions as the Proton donor in the catalytic mechanism. A disordered region spans residues 460–479; that stretch reads ANGEENRDGTNNNYSNNHGK.

It belongs to the glycosyl hydrolase 13 family.

It catalyses the reaction Hydrolysis of (1-&gt;6)-alpha-D-glucosidic linkages to branches with degrees of polymerization of three or four glucose residues in limit dextrin.. It participates in glycan degradation; glycogen degradation. In terms of biological role, removes maltotriose and maltotetraose chains that are attached by 1,6-alpha-linkage to the limit dextrin main chain, generating a debranched limit dextrin. This chain is Glycogen debranching enzyme, found in Escherichia coli O9:H4 (strain HS).